Reading from the N-terminus, the 316-residue chain is N-acetyl-gamma-glutamyl-phosphate reductase (316 aa).

The active site involves C136.

It belongs to the NAGSA dehydrogenase family. Type 1 subfamily.

The protein localises to the cytoplasm. It catalyses the reaction N-acetyl-L-glutamate 5-semialdehyde + phosphate + NADP(+) = N-acetyl-L-glutamyl 5-phosphate + NADPH + H(+). It functions in the pathway amino-acid biosynthesis; L-arginine biosynthesis; N(2)-acetyl-L-ornithine from L-glutamate: step 3/4. Its function is as follows. Catalyzes the NADPH-dependent reduction of N-acetyl-5-glutamyl phosphate to yield N-acetyl-L-glutamate 5-semialdehyde. The sequence is that of N-acetyl-gamma-glutamyl-phosphate reductase from Xanthomonas euvesicatoria pv. vesicatoria (strain 85-10) (Xanthomonas campestris pv. vesicatoria).